The sequence spans 523 residues: 2-isopropylmalate synthase (523 aa).

A Pyruvate carboxyltransferase domain is found at 5–267; the sequence is VIIFDTTLRD…HTAINHQEIW (263 aa). Mn(2+) contacts are provided by Asp-14, His-202, His-204, and Asn-238. The tract at residues 392 to 523 is regulatory domain; the sequence is RLDYFSVQSG…QHNENNKETV (132 aa).

The protein belongs to the alpha-IPM synthase/homocitrate synthase family. LeuA type 1 subfamily. In terms of assembly, homodimer. Mn(2+) serves as cofactor.

Its subcellular location is the cytoplasm. It catalyses the reaction 3-methyl-2-oxobutanoate + acetyl-CoA + H2O = (2S)-2-isopropylmalate + CoA + H(+). It functions in the pathway amino-acid biosynthesis; L-leucine biosynthesis; L-leucine from 3-methyl-2-oxobutanoate: step 1/4. In terms of biological role, catalyzes the condensation of the acetyl group of acetyl-CoA with 3-methyl-2-oxobutanoate (2-ketoisovalerate) to form 3-carboxy-3-hydroxy-4-methylpentanoate (2-isopropylmalate). In Escherichia coli O45:K1 (strain S88 / ExPEC), this protein is 2-isopropylmalate synthase.